The chain runs to 395 residues: Lipoyl synthase, mitochondrial (395 aa).

Residues 1–24 (MVKLPSASRIRSLATVPSTATRAF) constitute a mitochondrion transit peptide. Residues Cys107, Cys112, Cys118, Cys137, Cys141, Cys144, and Ser357 each coordinate [4Fe-4S] cluster. The Radical SAM core domain maps to 122-346 (GKGNATATIM…KNVAEGMGFL (225 aa)).

The protein belongs to the radical SAM superfamily. Lipoyl synthase family. It depends on [4Fe-4S] cluster as a cofactor.

It is found in the mitochondrion. The enzyme catalyses [[Fe-S] cluster scaffold protein carrying a second [4Fe-4S](2+) cluster] + N(6)-octanoyl-L-lysyl-[protein] + 2 oxidized [2Fe-2S]-[ferredoxin] + 2 S-adenosyl-L-methionine + 4 H(+) = [[Fe-S] cluster scaffold protein] + N(6)-[(R)-dihydrolipoyl]-L-lysyl-[protein] + 4 Fe(3+) + 2 hydrogen sulfide + 2 5'-deoxyadenosine + 2 L-methionine + 2 reduced [2Fe-2S]-[ferredoxin]. It participates in protein modification; protein lipoylation via endogenous pathway; protein N(6)-(lipoyl)lysine from octanoyl-[acyl-carrier-protein]: step 2/2. Its function is as follows. Catalyzes the radical-mediated insertion of two sulfur atoms into the C-6 and C-8 positions of the octanoyl moiety bound to the lipoyl domains of lipoate-dependent enzymes, thereby converting the octanoylated domains into lipoylated derivatives. This chain is Lipoyl synthase, mitochondrial, found in Cryptococcus neoformans var. neoformans serotype D (strain B-3501A) (Filobasidiella neoformans).